Reading from the N-terminus, the 707-residue chain is Casein kinase 1-like protein HD16 (707 aa).

The disordered stretch occupies residues 19 to 67 (YDVQDADPAASPVSPAPRGRTGRRGGAAAGRGNKTVAEGGGRKALKPRG). The span at 24–37 (ADPAASPVSPAPRG) shows a compositional bias: low complexity. The Protein kinase domain occupies 147–425 (YITDRKLGKG…KLISLFDGLI (279 aa)). ATP is bound by residues 153–161 (LGKGGFGQV) and Lys184. Residue Asp276 is the Proton acceptor of the active site.

The protein belongs to the protein kinase superfamily. CK1 Ser/Thr protein kinase family. Casein kinase I subfamily. Monomer. Interacts with GHD7 (via C-terminus). Interacts with SLR1. In terms of processing, autophosphorylated. In terms of tissue distribution, expressed in roots, leaves and stems. Expressed in leaf vascular bundles, and proximal regions of the shoot and roots.

It is found in the cytoplasm. The protein resides in the nucleus. The catalysed reaction is L-seryl-[protein] + ATP = O-phospho-L-seryl-[protein] + ADP + H(+). The enzyme catalyses L-threonyl-[protein] + ATP = O-phospho-L-threonyl-[protein] + ADP + H(+). In terms of biological role, casein kinases are operationally defined by their preferential utilization of acidic proteins such as caseins as substrates. It can phosphorylate a large number of proteins. Can phosphorylate casein on threonine residues in vitro. Involved in the regulation of flowering time through gibberellin (GA) signaling, and independently of photoperiod. Phosphorylates the DELLA protein SLR1, stabilizing SLR1 protein and sustaining SLR1 activity as repressor of GA signaling. Required for normal development of male floral organs and grains, through modulation of GA signaling. Targeted and repressed by the homeobox protein HAZ1 during GA signaling. Can phosphorylate phosvitin and SLR1 in vitro. Is not required for clock function in either the presence or the absence of light signals. Involved in a genetic control pathway for photoperiodic flowering under long day (LD) conditions that includes HD1, GHD7, HD5 and HD2. Phosphorylates and activates GHD7, a major floral repressor under LD conditions. Phosphorylation of GHD7 enhances its function in the repression of EHD1, HD3A and HD3B/RFT1, and obviously delaying flowering. This chain is Casein kinase 1-like protein HD16, found in Oryza sativa subsp. japonica (Rice).